We begin with the raw amino-acid sequence, 221 residues long: Ependymin-2 (221 aa).

A signal peptide spans 1–21; it reads MQDFAFAALSIWLCLGATALA. N-linked (GlcNAc...) asparagine glycans are attached at residues N33, N73, and N97.

The protein belongs to the ependymin family. Post-translationally, binds calcium through the terminal sialic acids. EPDs are synthesized in the meninx and secreted in the cerebrospinal fluid.

It is found in the secreted. Its function is as follows. May play a role in neural plasticity. May be involved during axon regeneration. In Salmo salar (Atlantic salmon), this protein is Ependymin-2 (epd2).